Consider the following 43-residue polypeptide: RGVCSTPEGSCVHNGCICQNAPCCHPSGCNWANVCPGYLWDKN.

A propeptide is located at residue Arg1. Disulfide bonds link Cys4–Cys16, Cys11–Cys24, Cys18–Cys29, and Cys23–Cys35. Trp31 carries the 6'-bromotryptophan modification. Position 36 is a 4-hydroxyproline (Pro36). Residue Trp40 is modified to 6'-bromotryptophan.

As to expression, expressed by the venom duct.

The protein localises to the secreted. Its function is as follows. Mu-conotoxins block voltage-gated sodium channels. This toxin reversibly blocks voltage-gated sodium channel in cephalopods, with no alteration in the voltage dependence of sodium conductance or on the kinetics of inactivation. The sequence is that of Mu-conotoxin-like Cal 12.2c from Californiconus californicus (California cone).